Here is a 308-residue protein sequence, read N- to C-terminus: Olfactory receptor 2T6 (308 aa).

The Extracellular portion of the chain corresponds to Met-1–Phe-28. A glycan (N-linked (GlcNAc...) asparagine) is linked at Asn-5. Residues Gly-29 to Ile-49 form a helical membrane-spanning segment. Over Asn-50–Thr-57 the chain is Cytoplasmic. The chain crosses the membrane as a helical span at residues Pro-58–Val-78. Topologically, residues Pro-79 to Thr-98 are extracellular. An intrachain disulfide couples Cys-97 to Cys-179. A helical membrane pass occupies residues Ala-99–Ala-119. Topologically, residues Tyr-120–Leu-145 are cytoplasmic. The chain crosses the membrane as a helical span at residues Ala-146–Leu-166. The Extracellular portion of the chain corresponds to Pro-167–Cys-203. The chain crosses the membrane as a helical span at residues Val-204 to Thr-224. The Cytoplasmic segment spans residues Val-225–Lys-236. A helical membrane pass occupies residues Ala-237–Tyr-257. Over Thr-258–Asp-271 the chain is Extracellular. A helical membrane pass occupies residues Lys-272 to Leu-292. Topologically, residues Arg-293–Cys-308 are cytoplasmic.

The protein belongs to the G-protein coupled receptor 1 family.

The protein localises to the cell membrane. Odorant receptor. The sequence is that of Olfactory receptor 2T6 (OR2T6) from Homo sapiens (Human).